Reading from the N-terminus, the 185-residue chain is Large ribosomal subunit protein bL25 (185 aa).

This sequence belongs to the bacterial ribosomal protein bL25 family. CTC subfamily. As to quaternary structure, part of the 50S ribosomal subunit; part of the 5S rRNA/L5/L18/L25 subcomplex. Contacts the 5S rRNA. Binds to the 5S rRNA independently of L5 and L18.

Its function is as follows. This is one of the proteins that binds to the 5S RNA in the ribosome where it forms part of the central protuberance. This is Large ribosomal subunit protein bL25 from Chlamydia trachomatis serovar L2 (strain ATCC VR-902B / DSM 19102 / 434/Bu).